A 606-amino-acid polypeptide reads, in one-letter code: Neutral/alkaline invertase 3, chloroplastic (606 aa).

Residues 1–58 (MGIAEVALHSMPGAFAAHSPASNLPLAADAARGRRRRSANSLHSSRALQGPVRFPGLR) constitute a chloroplast transit peptide. A disordered region spans residues 97-126 (RVPGQAVGGNGSVNGSAAKPPPQRRKASSV).

It belongs to the glycosyl hydrolase 100 family.

The protein localises to the plastid. It localises to the chloroplast. It catalyses the reaction Hydrolysis of terminal non-reducing beta-D-fructofuranoside residues in beta-D-fructofuranosides.. In terms of biological role, mitochondrial invertase that cleaves sucrose into glucose and fructose. The chain is Neutral/alkaline invertase 3, chloroplastic from Oryza sativa subsp. japonica (Rice).